Reading from the N-terminus, the 181-residue chain is Alkyl hydroperoxide reductase AhpD (181 aa).

Residue Cys131 is the Proton donor of the active site. Cysteines 131 and 134 form a disulfide. Residue Cys134 is the Cysteine sulfenic acid (-SOH) intermediate of the active site.

Belongs to the AhpD family.

It catalyses the reaction N(6)-[(R)-dihydrolipoyl]-L-lysyl-[lipoyl-carrier protein] + a hydroperoxide = N(6)-[(R)-lipoyl]-L-lysyl-[lipoyl-carrier protein] + an alcohol + H2O. Antioxidant protein with alkyl hydroperoxidase activity. Required for the reduction of the AhpC active site cysteine residues and for the regeneration of the AhpC enzyme activity. The protein is Alkyl hydroperoxide reductase AhpD of Rhodopseudomonas palustris (strain BisA53).